The sequence spans 146 residues: MAALARIGGRHLKSVCLINSSASCFFTQRRGVASKLFIGGLSFCTTEQGLSEAFSKCGQVVEAQIVMDRVSDRSKGFGFVTFASADEAQKALMEFNGQQLNGRTIFVDYAKAKQSLGGGGGYPIARGPPDPAVIAATRTTETSKSD.

The transit peptide at 1–31 (MAALARIGGRHLKSVCLINSSASCFFTQRRG) directs the protein to the chloroplast. One can recognise an RRM domain in the interval 34 to 112 (SKLFIGGLSF…RTIFVDYAKA (79 aa)). Position 42 is a phosphoserine (S42).

In terms of tissue distribution, expressed in rosette leaves, cauline leaves, stems and flowers.

The protein resides in the plastid. It localises to the chloroplast. Functionally, probable RNA-binding protein that may be involved in salt and oxidative stress tolerance. The polypeptide is Small RNA-binding protein 11, chloroplastic (Arabidopsis thaliana (Mouse-ear cress)).